The sequence spans 180 residues: Putative methyltransferase YrhH (180 aa).

The protein belongs to the methyltransferase superfamily.

The chain is Putative methyltransferase YrhH (yrhH) from Bacillus subtilis (strain 168).